Here is a 239-residue protein sequence, read N- to C-terminus: Phosphoadenosine 5'-phosphosulfate reductase (239 aa).

C235 acts as the Nucleophile; cysteine thiosulfonate intermediate in catalysis.

This sequence belongs to the PAPS reductase family. CysH subfamily.

Its subcellular location is the cytoplasm. The catalysed reaction is [thioredoxin]-disulfide + sulfite + adenosine 3',5'-bisphosphate + 2 H(+) = [thioredoxin]-dithiol + 3'-phosphoadenylyl sulfate. It participates in sulfur metabolism; hydrogen sulfide biosynthesis; sulfite from sulfate: step 3/3. In terms of biological role, catalyzes the formation of sulfite from phosphoadenosine 5'-phosphosulfate (PAPS) using thioredoxin as an electron donor. This is Phosphoadenosine 5'-phosphosulfate reductase from Thiocapsa roseopersicina.